Reading from the N-terminus, the 983-residue chain is MDRRRLPLLLLCAALGSAGRLSARPGNEVNLLDSKTIQGELGWISYPSHGWEEISGVDEHYTPIRTYQESNVMDHSQNNWLRTNWIPRNSAQKIYVELKFTLRDCNSIPLVLGTCKETFNLYYMESDDDHLAKFREHQFTKIDTIAADESFTQMDLGDRILKLNTEVREVGPVSKKGFYLAFQDVGACVALVSVRVYFKKCPFTVKNLAMFPDTVPMDSQSLVEVRGSCVNHSKEEEPPKMYCSTEGEWLVPIGKCLCNAGYEERGFACQACRPGFYKASAGNVKCAKCPPHSSTYEDASLNCRCEKNYFRSEKDPPSMACTRPPSAPRNVISNINETSVILDWSWPLDTGGRKDVTFNIICKKCGGSSKICEPCSDNVRFLPRQTGLTNTTVTVVDLLAHTNYTFEIDAVNGVSDLSTLSRQFAAVSITTNQAAPSPITVIRKDRTSRNSVSLSWQEPEHPNGIILDYEVKYYEKQEQETSYTILRAKSTNVTISGLKPDTTYVFQIRARTAARYGTSSRKFEFETSPDSFSISSENSQVVMIAISAAVAIILLTVVVYVLIGRFCGYKKSKHGTDEKRLHFGNGHLKLPGLRTYVDPHTYEDPNQAVHEFAKELDASNISIDKVVGAGEFGEVCSGRLKLPSKKEISVAIKTLKAGYTEKQRRDFLGEASIMGQFDHPNIIRLEGVVTKSKPVMIVTEYMENGSLDSFLRKHDAQFTVIQLVGMLRGIASGMKYLSDMGYVHRDLAARNILINSNLVCKVSDFGLSRVLEDDPEAAYTTRGGKIPIRWTSPEAIAYRKFTSASDAWSYGIVLWEVMSYGERPYWEMSFQDVIKAVDEGYRLPPPMDCPAALYQLMLDCWQKDRNNRPKFEQIVSILDKLIRNPSSLKIITNAAARPSNLLLDQSNIDISAFRTAGDWLNGFRTGQCKGIFTGVEYSSCDTIAKISTDDMKKVGVTVVGPQKKIVSSIKTLETHTKNSPVPV.

Residues 1-19 (MDRRRLPLLLLCAALGSAG) form the signal peptide. At 20 to 540 (RLSARPGNEV…SFSISSENSQ (521 aa)) the chain is on the extracellular side. Positions 28–206 (EVNLLDSKTI…YFKKCPFTVK (179 aa)) constitute an Eph LBD domain. N-linked (GlcNAc...) asparagine glycosylation is found at asparagine 231, asparagine 336, asparagine 390, asparagine 403, and asparagine 492. 2 consecutive Fibronectin type-III domains span residues 324–434 (PPSA…TNQA) and 435–530 (APSP…TSPD). Residues 541–564 (VVMIAISAAVAIILLTVVVYVLIG) traverse the membrane as a helical segment. The Cytoplasmic portion of the chain corresponds to 565–983 (RFCGYKKSKH…THTKNSPVPV (419 aa)). 2 positions are modified to phosphotyrosine; by autocatalysis: tyrosine 596 and tyrosine 602. The Protein kinase domain maps to 621–882 (ISIDKVVGAG…QIVSILDKLI (262 aa)). Residues 628–633 (GAGEFG), lysine 653, and 700–706 (EYMENGS) contribute to the ATP site. Residue tyrosine 701 is modified to Phosphotyrosine; by autocatalysis. Catalysis depends on aspartate 746, which acts as the Proton acceptor. 750–751 (RN) is a binding site for ATP. Tyrosine 779 is modified (phosphotyrosine; by autocatalysis). One can recognise an SAM domain in the interval 911–975 (SAFRTAGDWL…VSSIKTLETH (65 aa)). The PDZ-binding motif lies at 981–983 (VPV).

It belongs to the protein kinase superfamily. Tyr protein kinase family. Ephrin receptor subfamily. As to quaternary structure, heterotetramer upon binding of the ligand. The heterotetramer is composed of an ephrin dimer and a receptor dimer. Oligomerization is probably required to induce biological responses. Post-translationally, autophosphorylates upon activation by EFNA5. As to expression, highly expressed in the developing brain and embryonic tissues. In adult, the greatest levels of expression occur in the brain. It is expressed in a graded manner across the retina with the highest expression at its temporal pole. Detectable in all other adult tissues examined, except the liver.

It is found in the cell membrane. The enzyme catalyses L-tyrosyl-[protein] + ATP = O-phospho-L-tyrosyl-[protein] + ADP + H(+). In terms of biological role, receptor tyrosine kinase which binds promiscuously membrane-bound ephrin family ligands residing on adjacent cells, leading to contact-dependent bidirectional signaling into neighboring cells. The signaling pathway downstream of the receptor is referred to as forward signaling while the signaling pathway downstream of the ephrin ligand is referred to as reverse signaling. Highly promiscuous for ephrin-A ligands it binds preferentially EFNA5. Upon activation by EFNA5 regulates cell-cell adhesion, cytoskeletal organization and cell migration. Plays a role in cardiac cells migration and differentiation probably through activation by EFNA1. Involved in the retinotectal mapping of neurons. May also control the segregation but not the guidance of motor and sensory axons during neuromuscular circuit development. This Gallus gallus (Chicken) protein is Ephrin type-A receptor 3 (EPHA3).